Consider the following 260-residue polypeptide: Hydroxyethylthiazole kinase 1 (260 aa).

A substrate-binding site is contributed by M39. R115 and T160 together coordinate ATP. A substrate-binding site is contributed by G187.

The protein belongs to the Thz kinase family. It depends on Mg(2+) as a cofactor.

The catalysed reaction is 5-(2-hydroxyethyl)-4-methylthiazole + ATP = 4-methyl-5-(2-phosphooxyethyl)-thiazole + ADP + H(+). The protein operates within cofactor biosynthesis; thiamine diphosphate biosynthesis; 4-methyl-5-(2-phosphoethyl)-thiazole from 5-(2-hydroxyethyl)-4-methylthiazole: step 1/1. Its function is as follows. Catalyzes the phosphorylation of the hydroxyl group of 4-methyl-5-beta-hydroxyethylthiazole (THZ). The protein is Hydroxyethylthiazole kinase 1 of Streptococcus pneumoniae (strain JJA).